We begin with the raw amino-acid sequence, 186 residues long: Ion-translocating oxidoreductase complex subunit B (186 aa).

The hydrophobic stretch occupies residues 1–23 (MLTPILALTALALIAGALLGFAA). The 60-residue stretch at 29 to 88 (EGNPIADQVDAVLPQTQCGQCGFGGCRPYAEAIAAGEAEINRCPPGGQDTVQTLADLLGV) folds into the 4Fe-4S domain. Positions 46, 49, 54, 71, 114, 117, 120, 124, 144, 147, 150, and 154 each coordinate [4Fe-4S] cluster. 4Fe-4S ferredoxin-type domains are found at residues 105–134 (QVAW…GAAK) and 135–164 (QMHT…MVPV).

It belongs to the 4Fe4S bacterial-type ferredoxin family. RnfB subfamily. As to quaternary structure, the complex is composed of six subunits: RnfA, RnfB, RnfC, RnfD, RnfE and RnfG. Requires [4Fe-4S] cluster as cofactor.

It is found in the cell inner membrane. Part of a membrane-bound complex that couples electron transfer with translocation of ions across the membrane. This Alkalilimnicola ehrlichii (strain ATCC BAA-1101 / DSM 17681 / MLHE-1) protein is Ion-translocating oxidoreductase complex subunit B.